The chain runs to 80 residues: Protein Vpu (80 aa).

The Extracellular portion of the chain corresponds to 1-6 (MYILGL). A helical membrane pass occupies residues 7-27 (GIGALVVTFIIAVIVWTIVYI). At 28 to 80 (EYKKLVRQKKIDRLIERIGERAEDSGNESDGDTEELSKLMEMGHLNLGYVADL) the chain is on the cytoplasmic side. 2 positions are modified to phosphoserine; by host CK2: S52 and S56.

Belongs to the HIV-1 VPU protein family. In terms of assembly, homopentamer. Interacts with host CD4 and BRTC; these interactions induce proteasomal degradation of CD4. Interacts with host BST2; this interaction leads to the degradation of host BST2. Interacts with host FBXW11. Interacts with host AP1M1; this interaction plays a role in the mistrafficking and subsequent degradation of host BST2. Interacts with host RANBP2; this interaction allows Vpu to down-regulate host BLM sumoylation. Post-translationally, phosphorylated by host CK2. This phosphorylation is necessary for interaction with human BTRC and degradation of CD4.

The protein localises to the host membrane. With respect to regulation, ion channel activity is inhibited by hexamethylene amiloride in vitro. Enhances virion budding by targeting host CD4 and Tetherin/BST2 to proteasome degradation. Degradation of CD4 prevents any unwanted premature interactions between viral Env and its host receptor CD4 in the endoplasmic reticulum. Degradation of antiretroviral protein Tetherin/BST2 is important for virion budding, as BST2 tethers new viral particles to the host cell membrane. Mechanistically, Vpu bridges either CD4 or BST2 to BTRC, a substrate recognition subunit of the Skp1/Cullin/F-box protein E3 ubiquitin ligase, induces their ubiquitination and subsequent proteasomal degradation. The alteration of the E3 ligase specificity by Vpu seems to promote the degradation of host IKBKB, leading to NF-kappa-B down-regulation and subsequent apoptosis. Acts as a viroporin that forms an oligomeric ion channel in membranes. Modulates the host DNA repair mechanisms to promote degradation of nuclear viral cDNA in cells that are already productively infected in order to suppress immune sensing and proviral hyper-integration (superinfection). Manipulates PML-NBs and modulates SUMOylation of host BLM protein thereby enhancing its DNA-end processing activity toward viral unintegrated linear DNA. Also inhibits RAD52-mediated homologous repair of viral cDNA, preventing the generation of dead-end circular forms of single copies of the long terminal repeat and permitting sustained nucleolytic attack. This chain is Protein Vpu, found in Human immunodeficiency virus type 1 group M subtype H (isolate 90CF056) (HIV-1).